A 161-amino-acid chain; its full sequence is UPF0178 protein Rsph17025_3122 (161 aa).

This sequence belongs to the UPF0178 family.

This Cereibacter sphaeroides (strain ATCC 17025 / ATH 2.4.3) (Rhodobacter sphaeroides) protein is UPF0178 protein Rsph17025_3122.